Reading from the N-terminus, the 303-residue chain is Thioesterase poxG (303 aa).

It belongs to the lcsJ thioesterase family.

Its pathway is secondary metabolite biosynthesis. Its function is as follows. Thioesterase; part of the gene cluster that mediates the biosynthesis of oxaleimides, cytotoxic compounds containing an unusual disubstituted succinimide moiety. The first step of the pathway is provided by the HR-PKS poxF that serves in a new mode of collaborative biosynthesis with the PKS-NRPS poxE, by providing the olefin containing amino acid substrate via the synthesis of an ACP-bound dec-4-enoate. The cytochrome P450 monooxygenase poxM-catalyzed oxidation at the alpha-position creates the enzyme-bound 2-hydroxydec-4-enoyl-ACP thioester, which may be prone to spontaneous hydrolysis to yield 2-hydroxydec-4-enoic acid due to increased electrophilicity of the carbonyl. 2-hydroxydec-4-enoic acid can then be further oxidized by poxM to yield the alpha-ketoacid 2-oxodec-4-enoicacid, which is reductively aminated by the aminotransferase poxL to yield (S,E)-2-aminodec-4-enoic acid. The Hybrid PKS-NRPS synthetase poxE then performs condensation between the octaketide product of its PKS modules and the amino group of (S,E)-2-aminodec-4-enoic acid which is activated and incorporated by the adenylation domain. The resulting aminoacyl product can be cyclized by the Diels-Alderase PoxQ and reductively released by the reductive (R) domain of poxE to yield an aldehyde intermediate. The released aldehyde is then substrate for a Knoevenagel condensation by the hydrolyase poxO followed by an oxidation at the 5-position of the pyrrolidone ring. The presence of the olefin from the amino acid building block allows for migration of the substituted allyl group to occur. This allylic transposition reaction takes place in a conjugate addition, semipinacol-like fashion to yield a succinimide intermediate. Iterative two-electron oxidations of the C7 methyl of the succinimide intermediate to the carboxylic acid can be catalyzed by one of two remaining cytochrome P450 monooxygenasess poxC or poxD to yield oxaleimide A. Subsequent oxidation yields the maleimide scaffold oxaleimide I. Both oxaleimide A and oxaleimide I can undergo oxidative modifications in the decalin ring to yield the series of products oxaleimides B to H. This Penicillium oxalicum (strain 114-2 / CGMCC 5302) (Penicillium decumbens) protein is Thioesterase poxG.